The primary structure comprises 183 residues: Ferritin heavy chain (183 aa).

M1 is subject to N-acetylmethionine. T2 bears the N-acetylthreonine; in Ferritin heavy chain, N-terminally processed mark. A Ferritin-like diiron domain is found at 11 to 160; sequence QNYHQDSEAA…DHVTNLRKMG (150 aa). 5 residues coordinate Fe cation: E28, E63, H66, E108, and Q142. Residues S179 and S183 each carry the phosphoserine modification.

It belongs to the ferritin family. As to quaternary structure, oligomer of 24 subunits. There are two types of subunits: L (light) chain and H (heavy) chain. The major chain can be light or heavy, depending on the species and tissue type. The functional molecule forms a roughly spherical shell with a diameter of 12 nm and contains a central cavity into which the insoluble mineral iron core is deposited. Interacts with NCOA4; NCOA4 promotes targeting of the iron-binding ferritin complex to autolysosomes following starvation or iron depletion.

The protein resides in the cytoplasm. The protein localises to the lysosome. Its subcellular location is the cytoplasmic vesicle. It is found in the autophagosome. It catalyses the reaction 4 Fe(2+) + O2 + 4 H(+) = 4 Fe(3+) + 2 H2O. In terms of biological role, stores iron in a soluble, non-toxic, readily available form. Important for iron homeostasis. Has ferroxidase activity. Iron is taken up in the ferrous form and deposited as ferric hydroxides after oxidation. Also plays a role in delivery of iron to cells. Mediates iron uptake in capsule cells of the developing kidney. Delivery to lysosomes is mediated by the cargo receptor NCOA4 for autophagic degradation and release of iron. The protein is Ferritin heavy chain (FTH1) of Pongo abelii (Sumatran orangutan).